Consider the following 426-residue polypeptide: Cytochrome c biogenesis protein CcsB (426 aa).

3 helical membrane-spanning segments follow: residues 11–31 (LRVA…GTAI), 69–89 (SVWF…CSWR), and 159–179 (VGPL…VWGV).

This sequence belongs to the Ccs1/CcsB family. May interact with CcsA.

The protein localises to the cellular thylakoid membrane. In terms of biological role, required during biogenesis of c-type cytochromes (cytochrome c6 and cytochrome f) at the step of heme attachment. The protein is Cytochrome c biogenesis protein CcsB of Synechococcus sp. (strain CC9902).